The sequence spans 349 residues: Holliday junction branch migration complex subunit RuvB (349 aa).

The large ATPase domain (RuvB-L) stretch occupies residues 1–185; sequence MSQEKERLIS…FGSIFRLDFY (185 aa). ATP-binding positions include Leu-24, Arg-25, Gly-66, Lys-69, Thr-70, Thr-71, 132-134, Arg-175, Tyr-185, and Arg-222; that span reads EDY. Thr-70 is a binding site for Mg(2+). The small ATPAse domain (RuvB-S) stretch occupies residues 186–256; it reads DEEAIHDIVR…IAAESLACLE (71 aa). Positions 259 to 349 are head domain (RuvB-H); sequence KLGLDEIDHK…QQGLWTENGS (91 aa). Arg-314 and Arg-319 together coordinate DNA.

It belongs to the RuvB family. In terms of assembly, homohexamer. Forms an RuvA(8)-RuvB(12)-Holliday junction (HJ) complex. HJ DNA is sandwiched between 2 RuvA tetramers; dsDNA enters through RuvA and exits via RuvB. An RuvB hexamer assembles on each DNA strand where it exits the tetramer. Each RuvB hexamer is contacted by two RuvA subunits (via domain III) on 2 adjacent RuvB subunits; this complex drives branch migration. In the full resolvosome a probable DNA-RuvA(4)-RuvB(12)-RuvC(2) complex forms which resolves the HJ.

It localises to the cytoplasm. The enzyme catalyses ATP + H2O = ADP + phosphate + H(+). Functionally, the RuvA-RuvB-RuvC complex processes Holliday junction (HJ) DNA during genetic recombination and DNA repair, while the RuvA-RuvB complex plays an important role in the rescue of blocked DNA replication forks via replication fork reversal (RFR). RuvA specifically binds to HJ cruciform DNA, conferring on it an open structure. The RuvB hexamer acts as an ATP-dependent pump, pulling dsDNA into and through the RuvAB complex. RuvB forms 2 homohexamers on either side of HJ DNA bound by 1 or 2 RuvA tetramers; 4 subunits per hexamer contact DNA at a time. Coordinated motions by a converter formed by DNA-disengaged RuvB subunits stimulates ATP hydrolysis and nucleotide exchange. Immobilization of the converter enables RuvB to convert the ATP-contained energy into a lever motion, pulling 2 nucleotides of DNA out of the RuvA tetramer per ATP hydrolyzed, thus driving DNA branch migration. The RuvB motors rotate together with the DNA substrate, which together with the progressing nucleotide cycle form the mechanistic basis for DNA recombination by continuous HJ branch migration. Branch migration allows RuvC to scan DNA until it finds its consensus sequence, where it cleaves and resolves cruciform DNA. In Dehalococcoides mccartyi (strain CBDB1), this protein is Holliday junction branch migration complex subunit RuvB.